Reading from the N-terminus, the 96-residue chain is ATP synthase subunit c (96 aa).

Helical transmembrane passes span Phe9–Ile29 and Ile58–Ile78.

Belongs to the ATPase C chain family. F-type ATPases have 2 components, F(1) - the catalytic core - and F(0) - the membrane proton channel. F(1) has five subunits: alpha(3), beta(3), gamma(1), delta(1), epsilon(1). F(0) has three main subunits: a(1), b(2) and c(10-14). The alpha and beta chains form an alternating ring which encloses part of the gamma chain. F(1) is attached to F(0) by a central stalk formed by the gamma and epsilon chains, while a peripheral stalk is formed by the delta and b chains.

The protein localises to the cell inner membrane. In terms of biological role, f(1)F(0) ATP synthase produces ATP from ADP in the presence of a proton or sodium gradient. F-type ATPases consist of two structural domains, F(1) containing the extramembraneous catalytic core and F(0) containing the membrane proton channel, linked together by a central stalk and a peripheral stalk. During catalysis, ATP synthesis in the catalytic domain of F(1) is coupled via a rotary mechanism of the central stalk subunits to proton translocation. Its function is as follows. Key component of the F(0) channel; it plays a direct role in translocation across the membrane. A homomeric c-ring of between 10-14 subunits forms the central stalk rotor element with the F(1) delta and epsilon subunits. This chain is ATP synthase subunit c, found in Desulfosudis oleivorans (strain DSM 6200 / JCM 39069 / Hxd3) (Desulfococcus oleovorans).